Consider the following 214-residue polypeptide: Alpha-S1-casein (214 aa).

The N-terminal stretch at 1-15 is a signal peptide; the sequence is MKLLILTCLVAVALA. At serine 27 the chain carries Phosphoserine; in allele A. The residue at position 56 (serine 56) is a Phosphoserine; in allele C. Phosphoserine is present on residues serine 61 and serine 63. The tract at residues 69 to 91 is disordered; sequence MEDAKQMKAGSSSSSEEIVPNSA. Serine 79 bears the Phosphoserine; in alleles A and C mark. Phosphoserine is present on serine 80. The residue at position 81 (serine 81) is a Phosphoserine; in alleles A and C. Phosphoserine is present on serine 82. Phosphoserine; in alleles A and C is present on serine 83. Phosphoserine is present on serine 90. The segment at 105-111 is opioid-like peptide sequence; that stretch reads RYLGYLE. The residue at position 130 (serine 130) is a Phosphoserine.

This sequence belongs to the alpha-casein family. In terms of tissue distribution, mammary gland specific. Secreted in milk.

It is found in the secreted. Functionally, important role in the capacity of milk to transport calcium phosphate. The polypeptide is Alpha-S1-casein (CSN1S1) (Ovis aries (Sheep)).